Here is a 307-residue protein sequence, read N- to C-terminus: UDP-3-O-acyl-N-acetylglucosamine deacetylase (307 aa).

Residues His-78, His-241, and Asp-245 each contribute to the Zn(2+) site. Catalysis depends on His-268, which acts as the Proton donor.

Belongs to the LpxC family. The cofactor is Zn(2+).

The enzyme catalyses a UDP-3-O-[(3R)-3-hydroxyacyl]-N-acetyl-alpha-D-glucosamine + H2O = a UDP-3-O-[(3R)-3-hydroxyacyl]-alpha-D-glucosamine + acetate. The protein operates within glycolipid biosynthesis; lipid IV(A) biosynthesis; lipid IV(A) from (3R)-3-hydroxytetradecanoyl-[acyl-carrier-protein] and UDP-N-acetyl-alpha-D-glucosamine: step 2/6. Functionally, catalyzes the hydrolysis of UDP-3-O-myristoyl-N-acetylglucosamine to form UDP-3-O-myristoylglucosamine and acetate, the committed step in lipid A biosynthesis. The polypeptide is UDP-3-O-acyl-N-acetylglucosamine deacetylase (Bordetella bronchiseptica (strain ATCC BAA-588 / NCTC 13252 / RB50) (Alcaligenes bronchisepticus)).